The primary structure comprises 485 residues: Trk system potassium uptake protein TrkG (485 aa).

At 1 to 5 the chain is on the cytoplasmic side; it reads MNTSH. A helical transmembrane segment spans residues 6 to 32; it reads VRVVTHMCGFLVWLYSLSMLPPMVVAL. At 33-38 the chain is on the periplasmic side; that stretch reads FYKEKS. A helical transmembrane segment spans residues 39-60; it reads LFVFFITFVIFFCIGGGAWYTT. At 61–68 the chain is on the cytoplasmic side; that stretch reads KKSGIQLR. A helical membrane pass occupies residues 69-93; the sequence is TRDGFIIIVMFWILFSVISAFPLWI. The helical; Pore-forming intramembrane region spans 101–112; sequence FIDALFEGVSGI. An intramembrane segment occupies 113 to 118; that stretch reads TTTGAT. The selectivity filter part 1 stretch occupies residues 113–118; it reads TTTGAT. Positions 114 and 115 each coordinate K(+). At 119–127 the chain is on the periplasmic side; the sequence is VIDDVSSLP. A helical transmembrane segment spans residues 128–153; that stretch reads RAYLYYRSQLNFIGGLGVIVLAVAVL. Over 154 to 180 the chain is Cytoplasmic; the sequence is PLLGIGGAKLYQSEMPGPFKDDKLTPR. Residues 181–205 form a helical membrane-spanning segment; the sequence is LADTSRTLWITYSLLGIACIVCYRL. The Periplasmic segment spans residues 206-208; the sequence is AGM. Pro209 is an intramembrane region. Residues 210 to 221 constitute an intramembrane region (helical; Pore-forming); that stretch reads LFDAICHGISTV. The stretch at 222–227 is an intramembrane region; it reads SLGGFS. A selectivity filter part 2 region spans residues 222–227; the sequence is SLGGFS. Residues Leu223 and Gly224 each coordinate K(+). Topologically, residues 228–237 are periplasmic; the sequence is THSESIGYFN. Residues 238-253 constitute an intramembrane region (helical); sequence NYLVELVAGSFSLLSA. The chain crosses the membrane as a helical span at residues 277-297; the sequence is LRFFLLIALGVIIVTSFQVWH. Residues 303–318 constitute an intramembrane region (helical; Pore-forming); that stretch reads LHGSFIHSFFLASSML. An intramembrane segment occupies 319–324; it reads TDNGLA. A selectivity filter part 3 region spans residues 319–324; sequence TDNGLA. K(+) contacts are provided by Asp320 and Asn321. Residues 325 to 332 are Periplasmic-facing; sequence TQDYASWP. Residues 333-344 constitute an intramembrane region (helical); that stretch reads THTIVFLLLSSF. Residues 345-357 constitute an intramembrane region (note=Loop between two helices); sequence FGGCIGSTCGGIK. A helical membrane pass occupies residues 392-419; sequence TDRVMRSVWSFFFLYTLFTVFFILVLNG. Over 420 to 421 the chain is Periplasmic; that stretch reads MG. Residues 422 to 423 lie within the membrane without spanning it; it reads YD. The helical; Pore-forming intramembrane region spans 424–434; sequence FLTSFATVAAC. An intramembrane segment occupies 435-441; sequence INNMGLG. A selectivity filter part 4 region spans residues 436-441; that stretch reads NNMGLG. 2 residues coordinate K(+): Asn437 and Met438. Over 442 to 453 the chain is Periplasmic; sequence FGATASSFGVLN. Positions 454–465 form an intramembrane region, helical; it reads DIAKCLMCIAMI.

It belongs to the TrkH potassium transport family.

It is found in the cell inner membrane. In terms of biological role, low-affinity potassium transport system. Interacts with Trk system potassium uptake protein TrkA. Requires TrkE (sapD) for maximal transport activity, low activity is seen in its absence; no further stimulation is seen with SapF. Transport in the absence of SapD is dependent on a high membrane potential and a high cytoplasmic ATP concentration, suggesting this protein may be able to interact with other ATP-binding proteins. Can transport potassium and rubidium. The chain is Trk system potassium uptake protein TrkG (trkG) from Escherichia coli (strain K12).